The primary structure comprises 338 residues: Putative peptide import ATP-binding protein BMEII0863 (338 aa).

The ABC transporter domain occupies 10–263 (KGLRTVFRTR…PRHPYTMGLL (254 aa)). Residue 43–50 (GESGSGKS) coordinates ATP.

It belongs to the ABC transporter superfamily. As to quaternary structure, the complex is composed of two ATP-binding proteins (BMEII0863 and BMEII0864), two transmembrane proteins (BMEII0860 and BMEII0861) and a solute-binding protein (BMEII0859).

It is found in the cell inner membrane. Probably part of an ABC transporter complex that could be involved in peptide import. Probably responsible for energy coupling to the transport system. This is Putative peptide import ATP-binding protein BMEII0863 from Brucella melitensis biotype 1 (strain ATCC 23456 / CCUG 17765 / NCTC 10094 / 16M).